Here is a 716-residue protein sequence, read N- to C-terminus: MIYQSPTIQVELLEDNIARLCFNAEGSVNKFDRETLNSLNDALDALAQTQGVKGLMLTSGKDAFIVGADITEFLGLFAQDDNVLQGWLEDANKVFNKLEDLPFPTISAIKGFALGGGCETILATDLRIADTSARIGLPETKLGIIPGFGGTVRLPRVIGADNALEWITTGKDQRPEAALKVGAIDAVVAPELLETAACQMLQDAISEKIDWQARRQRKLSPLTLPKLEAMMSFATAKGMVFKVAGKHYPAPMAVVEVIEKAALSERAEALQVEHQAFIKLAKTDVAKALIGIFLNDQLVKGKAKKAAKQAQAVNSAAVLGAGIMGGGIAYQSASKGTPIVMKDINQAALDLGLNEAAKLLTAQINRGRSTPAKMAGVLNNITATLDYNALKQADVVVEAVVEHPKVKATVLAEVEQVVGEDAIITSNTSTISINLLAKSLQKPERFCGMHFFNPVHKMPLVEVIRGEHSSEETVASVVAYAAKMGKTPIVVNDCPGFFVNRVLFPYFAGFSGLLEDGADFAAIDKVMEKQFGWPMGPAYLLDVVGLDTGHHAQAVMAEGFPDRMAKEGKDAIDVMFEADRFGQKNGKGFYQYSVDRRGKPKKEVDPLSYELLGNAFGEQKEFSSDEIIARTMIPMIIETVRCLEEGIIATPAEADMGLVYGLGFPPFRGGVFRYLDTLGVANFVALADQYAHLGGLYQVTDKMRELAATNGSYYPA.

The interval 1–189 (MIYQSPTIQV…KVGAIDAVVA (189 aa)) is enoyl-CoA hydratase/isomerase. Asp-296 contacts substrate. The segment at 311-716 (QAVNSAAVLG…AATNGSYYPA (406 aa)) is 3-hydroxyacyl-CoA dehydrogenase. Residues Met-324, Asp-343, 400-402 (VVE), Lys-407, and Ser-429 contribute to the NAD(+) site. Catalysis depends on His-450, which acts as the For 3-hydroxyacyl-CoA dehydrogenase activity. Asn-453 serves as a coordination point for NAD(+). The substrate site is built by Asn-500 and Tyr-660.

In the N-terminal section; belongs to the enoyl-CoA hydratase/isomerase family. The protein in the C-terminal section; belongs to the 3-hydroxyacyl-CoA dehydrogenase family. In terms of assembly, heterotetramer of two alpha chains (FadB) and two beta chains (FadA).

It carries out the reaction a (3S)-3-hydroxyacyl-CoA + NAD(+) = a 3-oxoacyl-CoA + NADH + H(+). The enzyme catalyses a (3S)-3-hydroxyacyl-CoA = a (2E)-enoyl-CoA + H2O. It catalyses the reaction a 4-saturated-(3S)-3-hydroxyacyl-CoA = a (3E)-enoyl-CoA + H2O. The catalysed reaction is (3S)-3-hydroxybutanoyl-CoA = (3R)-3-hydroxybutanoyl-CoA. It carries out the reaction a (3Z)-enoyl-CoA = a 4-saturated (2E)-enoyl-CoA. The enzyme catalyses a (3E)-enoyl-CoA = a 4-saturated (2E)-enoyl-CoA. It participates in lipid metabolism; fatty acid beta-oxidation. Involved in the aerobic and anaerobic degradation of long-chain fatty acids via beta-oxidation cycle. Catalyzes the formation of 3-oxoacyl-CoA from enoyl-CoA via L-3-hydroxyacyl-CoA. It can also use D-3-hydroxyacyl-CoA and cis-3-enoyl-CoA as substrate. The chain is Fatty acid oxidation complex subunit alpha from Shewanella loihica (strain ATCC BAA-1088 / PV-4).